Reading from the N-terminus, the 353-residue chain is Photosystem II protein D1 (353 aa).

N-acetylthreonine is present on T2. Phosphothreonine is present on T2. 3 helical membrane-spanning segments follow: residues Y29–S46, H118–L133, and W142–A156. A chlorophyll a-binding site is contributed by H118. A pheophytin a-binding site is contributed by Y126. [CaMn4O5] cluster-binding residues include D170 and E189. A helical membrane pass occupies residues F197–L218. H198 contributes to the chlorophyll a binding site. Residues H215 and S264 to F265 each bind a quinone. Residue H215 participates in Fe cation binding. Fe cation is bound at residue H272. The helical transmembrane segment at F274–L288 threads the bilayer. Positions 332, 333, 342, and 344 each coordinate [CaMn4O5] cluster. A propeptide spanning residues A345–G353 is cleaved from the precursor.

It belongs to the reaction center PufL/M/PsbA/D family. In terms of assembly, PSII is composed of 1 copy each of membrane proteins PsbA, PsbB, PsbC, PsbD, PsbE, PsbF, PsbH, PsbI, PsbJ, PsbK, PsbL, PsbM, PsbT, PsbX, PsbY, PsbZ, Psb30/Ycf12, at least 3 peripheral proteins of the oxygen-evolving complex and a large number of cofactors. It forms dimeric complexes. Requires The D1/D2 heterodimer binds P680, chlorophylls that are the primary electron donor of PSII, and subsequent electron acceptors. It shares a non-heme iron and each subunit binds pheophytin, quinone, additional chlorophylls, carotenoids and lipids. D1 provides most of the ligands for the Mn4-Ca-O5 cluster of the oxygen-evolving complex (OEC). There is also a Cl(-1) ion associated with D1 and D2, which is required for oxygen evolution. The PSII complex binds additional chlorophylls, carotenoids and specific lipids. as cofactor. Post-translationally, tyr-161 forms a radical intermediate that is referred to as redox-active TyrZ, YZ or Y-Z. In terms of processing, C-terminally processed by CTPA; processing is essential to allow assembly of the oxygen-evolving complex and thus photosynthetic growth.

It is found in the plastid. It localises to the chloroplast thylakoid membrane. It carries out the reaction 2 a plastoquinone + 4 hnu + 2 H2O = 2 a plastoquinol + O2. Photosystem II (PSII) is a light-driven water:plastoquinone oxidoreductase that uses light energy to abstract electrons from H(2)O, generating O(2) and a proton gradient subsequently used for ATP formation. It consists of a core antenna complex that captures photons, and an electron transfer chain that converts photonic excitation into a charge separation. The D1/D2 (PsbA/PsbD) reaction center heterodimer binds P680, the primary electron donor of PSII as well as several subsequent electron acceptors. The chain is Photosystem II protein D1 from Agrostis stolonifera (Creeping bentgrass).